The following is a 314-amino-acid chain: Glycine--tRNA ligase alpha subunit (314 aa).

This sequence belongs to the class-II aminoacyl-tRNA synthetase family. Tetramer of two alpha and two beta subunits.

The protein resides in the cytoplasm. It carries out the reaction tRNA(Gly) + glycine + ATP = glycyl-tRNA(Gly) + AMP + diphosphate. This is Glycine--tRNA ligase alpha subunit from Leuconostoc citreum (strain KM20).